The sequence spans 419 residues: RING finger protein 150 (419 aa).

The first 34 residues, 1–34 (MALSVIQACRSLALSTWLLSFCFVHLLCLDFTVA), serve as a signal peptide directing secretion. Topologically, residues 35–197 (EKEEWYTAFV…NLQKYVSRTS (163 aa)) are extracellular. Residues 70–172 (SLKREARGVL…PKGRELVLLM (103 aa)) enclose the PA domain. Residues 198–218 (VVFVSISFIILMIISLAWLVF) traverse the membrane as a helical segment. At 219–419 (YYIQRFRYAN…IDTPTDDPKC (201 aa)) the chain is on the cytoplasmic side. Residues 267-308 (CAVCIEGYKPNDVVRILPCRHLFHKCCVDPWLVDHRTCPMCK) form an RING-type; atypical zinc finger. The disordered stretch occupies residues 374–419 (SEPLSQDTMPTEQSELQPIASGSSDVSLTTGAGHSDIDTPTDDPKC). A compositionally biased stretch (polar residues) spans 376 to 405 (PLSQDTMPTEQSELQPIASGSSDVSLTTGA).

The protein resides in the membrane. This Danio rerio (Zebrafish) protein is RING finger protein 150 (rnf150).